We begin with the raw amino-acid sequence, 240 residues long: Lactate utilization protein C (240 aa).

It belongs to the LutC/YkgG family.

In terms of biological role, is involved in L-lactate degradation and allows cells to grow with lactate as the sole carbon source. This is Lactate utilization protein C from Bacillus licheniformis (strain ATCC 14580 / DSM 13 / JCM 2505 / CCUG 7422 / NBRC 12200 / NCIMB 9375 / NCTC 10341 / NRRL NRS-1264 / Gibson 46).